Reading from the N-terminus, the 817-residue chain is Protein kintoun (817 aa).

Disordered regions lie at residues 233–259 (AEST…PRCS), 385–404 (AGAR…RKSC), 410–445 (AGTA…TPEN), and 473–503 (VQTS…KPLC). The segment covering 386 to 401 (GAREESADSSGADHGR) has biased composition (basic and acidic residues). 2 positions are modified to phosphoserine: Ser622 and Ser631. Residues 653–692 (ECSDPDGLQGKEKGVKEECPLSEKENTEHSTTSTADSNSS) form a disordered region. Basic and acidic residues predominate over residues 661 to 680 (QGKEKGVKEECPLSEKENTE). Residues 681–692 (HSTTSTADSNSS) are compositionally biased toward polar residues.

The protein belongs to the PIH1 family. Kintoun subfamily. Interacts with CFAP300. Interacts with DNAI2 and HSPA1A. Interacts with DNAAF4. Interacts with DNAAF6/PIH1D3.

The protein resides in the cytoplasm. Its subcellular location is the dynein axonemal particle. Its function is as follows. Required for cytoplasmic pre-assembly of axonemal dyneins, thereby playing a central role in motility in cilia and flagella. Involved in pre-assembly of dynein arm complexes in the cytoplasm before intraflagellar transport loads them for the ciliary compartment. In Rattus norvegicus (Rat), this protein is Protein kintoun.